We begin with the raw amino-acid sequence, 252 residues long: NAP1-related protein 2 (252 aa).

Residues 1 to 15 (MTAPADKGKKAKTDA) are compositionally biased toward basic and acidic residues. The interval 1-23 (MTAPADKGKKAKTDADGGAAEEN) is disordered. The stretch at 26 to 67 (IDGALVLSIEKLQEIQDELEKVNEEASDKVLEVEQKYSEIRR) forms a coiled coil. The tract at residues 222–252 (YFNNEAEELGEDDDEEGSDADEGEEDEEEEN) is disordered. The span at 226–252 (EAEELGEDDDEEGSDADEGEEDEEEEN) shows a compositional bias: acidic residues.

Belongs to the nucleosome assembly protein (NAP) family.

It localises to the nucleus. The protein resides in the cytoplasm. In terms of biological role, acts as a histone H2A/H2B chaperone in nucleosome assembly. The chain is NAP1-related protein 2 from Oryza sativa subsp. indica (Rice).